The following is a 69-amino-acid chain: MDLNLREAIMHNVANNTKEQLEHTIEDAIQRGEEKYLPGLGVLFEAIWTHANEQQKDMMLTTLEQAVKQ.

The protein belongs to the SspI family.

Its subcellular location is the spore core. This chain is Small, acid-soluble spore protein I, found in Geobacillus kaustophilus (strain HTA426).